The chain runs to 76 residues: UPF0291 protein BC_1827 (76 aa).

Belongs to the UPF0291 family.

The protein localises to the cytoplasm. In Bacillus cereus (strain ATCC 14579 / DSM 31 / CCUG 7414 / JCM 2152 / NBRC 15305 / NCIMB 9373 / NCTC 2599 / NRRL B-3711), this protein is UPF0291 protein BC_1827.